A 483-amino-acid chain; its full sequence is Cysteine--tRNA ligase (483 aa).

Cysteine 28 serves as a coordination point for Zn(2+). Residues 30–40 (MTVYDYCHLGH) carry the 'HIGH' region motif. 3 residues coordinate Zn(2+): cysteine 212, histidine 237, and glutamate 241. The short motif at 269–273 (KMSKS) is the 'KMSKS' region element. An ATP-binding site is contributed by lysine 272.

Belongs to the class-I aminoacyl-tRNA synthetase family. As to quaternary structure, monomer. Zn(2+) is required as a cofactor.

It is found in the cytoplasm. It carries out the reaction tRNA(Cys) + L-cysteine + ATP = L-cysteinyl-tRNA(Cys) + AMP + diphosphate. In Bordetella avium (strain 197N), this protein is Cysteine--tRNA ligase.